Consider the following 902-residue polypeptide: AAA+ ATPase ClpV1 (902 aa).

Residues 10 to 151 enclose the Clp R domain; that stretch reads FGKLNSLAYK…KVEALTERFD (142 aa). 2 repeat regions span residues 13–78 and 88–151; these read LNSL…LDRL and LSSH…ERFD. ATP is bound at residue 237–244; the sequence is GEAGVGKT. A coiled-coil region spans residues 441 to 559; it reads AEVDDSRRRI…AQLSALQGEE (119 aa). 640 to 647 provides a ligand contact to ATP; the sequence is GTSGVGKT.

Belongs to the ClpA/ClpB family. As to quaternary structure, interacts with TagJ.

Its subcellular location is the cytoplasm. Functionally, component of the H1 type VI (H1-T6SS) secretion system that plays a role in the release of toxins targeting both eukaryotic and prokaryotic species. Acts as an AAA(+) ATPase that disassembles the contracted sheath, which resets the systems for reassembly of an extended sheath that is ready to fire again. The polypeptide is AAA+ ATPase ClpV1 (clpV1) (Pseudomonas aeruginosa (strain ATCC 15692 / DSM 22644 / CIP 104116 / JCM 14847 / LMG 12228 / 1C / PRS 101 / PAO1)).